Consider the following 491-residue polypeptide: Cell division control protein 1 (491 aa).

The interval 1–33 is disordered; that stretch reads MVYRNRSKSVLSTHSKKSDDKAHYKSRSKKKSK. The Cytoplasmic portion of the chain corresponds to 1 to 39; the sequence is MVYRNRSKSVLSTHSKKSDDKAHYKSRSKKKSKSRSKKR. The segment covering 24–33 has biased composition (basic residues); that stretch reads YKSRSKKKSK. The chain crosses the membrane as a helical span at residues 40–60; sequence LRIYWRYISIVWILWLGLISY. Over 61-391 the chain is Extracellular; sequence YESVVVKRAM…LCYMPDPYKA (331 aa). A divalent metal cation is bound by residues Asp95, Asp144, Asn183, and His323. Residues 392–412 traverse the membrane as a helical segment; the sequence is IRMYLWGLLFSAAFIAYMHFF. At 413 to 465 the chain is on the cytoplasmic side; sequence PKSFNNRVATIMNRVFTRPDGNTSDLPLPTSISKSKSKKSLTHSKYAVNDTRS. A helical transmembrane segment spans residues 466–486; the sequence is IKQFLVNAIVLFVSVMPIFIY. Over 487–491 the chain is Extracellular; the sequence is FYTVV.

Belongs to the metallophosphoesterase superfamily. MPPE1 family. A divalent metal cation serves as cofactor.

It is found in the membrane. Probable metallophosphoesterase which may participate in recombinational repair of double -strand breaks. The polypeptide is Cell division control protein 1 (CDC1) (Saccharomyces cerevisiae (strain ATCC 204508 / S288c) (Baker's yeast)).